Consider the following 339-residue polypeptide: Arylacetonitrilase (339 aa).

Positions 5–290 constitute a CN hydrolase domain; the sequence is IRVAVTQAEP…EGIVYADLDL (286 aa). The active-site Proton acceptor is glutamate 45. Residue lysine 126 is part of the active site. Cysteine 167 (nucleophile) is an active-site residue.

Belongs to the carbon-nitrogen hydrolase superfamily. Nitrilase family.

The enzyme catalyses a nitrile + 2 H2O = a carboxylate + NH4(+). The catalysed reaction is 4-chlorophenylacetonitrile + 2 H2O = 4-chlorophenylacetate + NH4(+). Its function is as follows. Nitrilase that hydrolyzes preferentially phenylacetonitrile, (R,S)-mandelonitrile, and 3-indolylacetonitrile. The protein is Arylacetonitrilase of Fusarium vanettenii (strain ATCC MYA-4622 / CBS 123669 / FGSC 9596 / NRRL 45880 / 77-13-4) (Fusarium solani subsp. pisi).